The primary structure comprises 89 residues: Small ribosomal subunit protein uS15 (89 aa).

Belongs to the universal ribosomal protein uS15 family. In terms of assembly, part of the 30S ribosomal subunit. Forms a bridge to the 50S subunit in the 70S ribosome, contacting the 23S rRNA.

Its function is as follows. One of the primary rRNA binding proteins, it binds directly to 16S rRNA where it helps nucleate assembly of the platform of the 30S subunit by binding and bridging several RNA helices of the 16S rRNA. In terms of biological role, forms an intersubunit bridge (bridge B4) with the 23S rRNA of the 50S subunit in the ribosome. This chain is Small ribosomal subunit protein uS15, found in Salinispora tropica (strain ATCC BAA-916 / DSM 44818 / JCM 13857 / NBRC 105044 / CNB-440).